The primary structure comprises 388 residues: Methylthioribose-1-phosphate isomerase (388 aa).

The active-site Proton donor is D258.

It belongs to the eIF-2B alpha/beta/delta subunits family. MtnA subfamily.

It localises to the cytoplasm. It is found in the nucleus. It catalyses the reaction 5-(methylsulfanyl)-alpha-D-ribose 1-phosphate = 5-(methylsulfanyl)-D-ribulose 1-phosphate. It participates in amino-acid biosynthesis; L-methionine biosynthesis via salvage pathway; L-methionine from S-methyl-5-thio-alpha-D-ribose 1-phosphate: step 1/6. In terms of biological role, catalyzes the interconversion of methylthioribose-1-phosphate (MTR-1-P) into methylthioribulose-1-phosphate (MTRu-1-P). The protein is Methylthioribose-1-phosphate isomerase (mri-1) of Neurospora crassa (strain ATCC 24698 / 74-OR23-1A / CBS 708.71 / DSM 1257 / FGSC 987).